The sequence spans 130 residues: MLDKLLQKFRDQKKPVFHKEEGYWEISALRKWAAILIIAFGAGIIYIVPYFAFFQFKTAVANVTGVEPNRISLLLTAYGIVSLLFYIPGGWLADRISAKALFSVSMFGTGIITFWYFLVGLKGIVWITPN.

The next 3 helical transmembrane spans lie at 34–54 (AILIIAFGAGIIYIVPYFAFF), 73–93 (LLLTAYGIVSLLFYIPGGWLA), and 107–127 (FGTGIITFWYFLVGLKGIVWI).

It is found in the cell membrane. This is an uncharacterized protein from Mycoplasma pneumoniae (strain ATCC 29342 / M129 / Subtype 1) (Mycoplasmoides pneumoniae).